The chain runs to 593 residues: Meiotic recombination protein REC8 homolog (593 aa).

Ser149 carries the post-translational modification Phosphoserine. Thr164 bears the Phosphothreonine mark. Ser192 is modified (phosphoserine). Disordered regions lie at residues 247-282 (QRRA…AQVE), 317-344 (ELRL…RRGR), and 422-444 (PQLE…RRKT). Residues 255–265 (DESKEEPRALE) show a composition bias toward basic and acidic residues. Over residues 432 to 444 (EERVADKEERRKT) the composition is skewed to basic and acidic residues.

It belongs to the rad21 family. In terms of assembly, interacts (phosphorylated and unphosphorylated form) with SMC3. Interacts with SYCP3. Interacts (phosphorylated and unphosphorylated form) with SMC1B. Does not interact with SMC1A. Interacts with RAD51. Forms a complex with EWSR1, PRDM9, SYCP3 and SYCP1; complex formation is dependent of phosphorylated form of REC8 and requires PRDM9 bound to hotspot DNA; EWSR1 joins PRDM9 with the chromosomal axis through REC8. Post-translationally, phosphorylated.

It localises to the nucleus. It is found in the chromosome. The protein localises to the centromere. Its function is as follows. Required during meiosis for separation of sister chromatids and homologous chromosomes. Proteolytic cleavage of REC8 on chromosome arms by separin during anaphase I allows for homologous chromosome separation in meiosis I and cleavage of REC8 on centromeres during anaphase II allows for sister chromatid separation in meiosis II. The sequence is that of Meiotic recombination protein REC8 homolog from Rattus norvegicus (Rat).